Reading from the N-terminus, the 97-residue chain is Large ribosomal subunit protein uL23 (97 aa).

The protein belongs to the universal ribosomal protein uL23 family. As to quaternary structure, part of the 50S ribosomal subunit. Contacts protein L29, and trigger factor when it is bound to the ribosome.

One of the early assembly proteins it binds 23S rRNA. One of the proteins that surrounds the polypeptide exit tunnel on the outside of the ribosome. Forms the main docking site for trigger factor binding to the ribosome. This Bartonella henselae (strain ATCC 49882 / DSM 28221 / CCUG 30454 / Houston 1) (Rochalimaea henselae) protein is Large ribosomal subunit protein uL23.